Here is a 418-residue protein sequence, read N- to C-terminus: Sprouty-related, EVH1 domain-containing protein 2 (418 aa).

Residues 5–122 enclose the WH1 domain; that stretch reads THPDDDSYIV…RGVRKAIEDL (118 aa). Residues 127-172 are disordered; the sequence is TTSSSTIHNEAELGDDDVFTTATDSSSNSSQKREQPTRTVSSPTSC. Positions 146-156 are enriched in polar residues; that stretch reads TTATDSSSNSS. The KBD domain maps to 201-257; that stretch reads PYRQVSFPDDDEEIVRINPREKIWMTGYEDYRHAPVRGKYPDPSEDVDSSYVRFAKG. At Ser206 the chain carries Phosphoserine. A phosphotyrosine mark is found at Tyr228 and Tyr231. Residues 275-302 form a disordered region; the sequence is GLGEDPKGRGGSVIKTQPSRGKSRRRKE. The 109-residue stretch at 308-416 folds into the SPR domain; sequence RCVYCRDMFN…CRCCGGKHKA (109 aa).

As to quaternary structure, homodimer and heterodimer. Able to interact with SPRED1 to form heterodimers. Interacts with RAS. May interact with ZDHHC13 (via ANK repeats) and ZDHHC17 (via ANK repeats). Interacts with TESK1. Interacts with NF1. Phosphorylated on serine and threonine residues. Phosphorylated on tyrosine. Phosphorylation of Tyr-228 and Tyr-231 are required for ubiquitination. Post-translationally, ubiquitinated; leading to degradation by the proteasome.

Its subcellular location is the cell membrane. It localises to the cytoplasmic vesicle. The protein localises to the secretory vesicle membrane. The protein resides in the cytoplasm. Negatively regulates Ras signaling pathways and downstream activation of MAP kinases. Recruits and translocates NF1 to the cell membrane, thereby enabling NF1-dependent hydrolysis of active GTP-bound Ras to inactive GDP-bound Ras. Inhibits fibroblast growth factor (FGF)-induced retinal lens fiber differentiation, probably by inhibiting FGF-mediated phosphorylation of ERK1/2. Inhibits TGFB-induced epithelial-to-mesenchymal transition in lens epithelial cells. The sequence is that of Sprouty-related, EVH1 domain-containing protein 2 (SPRED2) from Pongo abelii (Sumatran orangutan).